Here is a 91-residue protein sequence, read N- to C-terminus: Lactococcin-B immunity protein (91 aa).

Functionally, imparts immunity to lactococcin-B to naturally sensitive host strains. The protein is Lactococcin-B immunity protein (lciB) of Lactococcus lactis subsp. cremoris (Streptococcus cremoris).